The chain runs to 430 residues: Multisubstrate adapter protein soc-1 (430 aa).

The PH domain maps to 7–133 (NIILEGSLKR…WVNEICKLCK (127 aa)). The segment covering 192–222 (SHNSLPSNPNYNNLPDPLESSRSETSSMYSS) has biased composition (low complexity). Disordered regions lie at residues 192–246 (SHNS…TRHT), 275–303 (EDAEDSSGETLKLDTPEQYPESVTSSEGF), and 315–377 (RRAP…RNLD). Residues 341–369 (RNLSRNGVNENGNYSATFSSRTSNYQQSE) are compositionally biased toward polar residues.

Interacts (via C-terminus) with sem-5 (probably via SH3 domain 2). Interacts with nicotinic acetylcholine receptor. In terms of processing, may be phosphorylated.

In terms of biological role, adapter protein which modulates signaling mediated by several receptor tyrosine kinases. Plays a role in fluid homeostasis, probably downstream of receptor egl-15 and upstream of let-60/Ras. Involved in nicotinic acetylcholine receptor (nAChR)-mediated sensitivity to nicotine and levamisole and gamma-aminobutyric acid (GABA)receptor-mediated sensitivity to muscimol. Regulates synaptic levels of nAchR receptor subunit lev-1 and unc-38, and GABA receptor subunit unc-49 in the nerve cord, probably downstream of egl-15. Regulates motility. During the formation of neuromuscular junctions at the larval stage, down-regulates membrane protrusion from body wall muscles, probably downstream of egl-15. Promotes vulva induction and down-regulates fertility, probably downstream of receptor let-23. Down-regulates daf-2-mediated repression of dauer formation and positively regulates daf-2-mediated aging. May be involved in the recruitment of phosphatase ptp-2 to egl-15. The sequence is that of Multisubstrate adapter protein soc-1 from Caenorhabditis elegans.